A 154-amino-acid polypeptide reads, in one-letter code: Lipoprotein signal peptidase (154 aa).

Helical transmembrane passes span 4 to 24 (IIIP…KLWI), 62 to 82 (LFTL…MKHI), and 84 to 104 (GSYW…GNFI). Catalysis depends on residues Asp-114 and Asp-130. A helical transmembrane segment spans residues 125–145 (IFNVADSYLTIGIICLMIALW).

Belongs to the peptidase A8 family.

It localises to the cell membrane. The catalysed reaction is Release of signal peptides from bacterial membrane prolipoproteins. Hydrolyzes -Xaa-Yaa-Zaa-|-(S,diacylglyceryl)Cys-, in which Xaa is hydrophobic (preferably Leu), and Yaa (Ala or Ser) and Zaa (Gly or Ala) have small, neutral side chains.. It participates in protein modification; lipoprotein biosynthesis (signal peptide cleavage). This protein specifically catalyzes the removal of signal peptides from prolipoproteins. This Streptococcus agalactiae serotype V (strain ATCC BAA-611 / 2603 V/R) protein is Lipoprotein signal peptidase.